The sequence spans 158 residues: NAD(P)H-quinone oxidoreductase subunit J, chloroplastic (158 aa).

Belongs to the complex I 30 kDa subunit family. As to quaternary structure, NDH is composed of at least 16 different subunits, 5 of which are encoded in the nucleus.

It localises to the plastid. It is found in the chloroplast thylakoid membrane. The enzyme catalyses a plastoquinone + NADH + (n+1) H(+)(in) = a plastoquinol + NAD(+) + n H(+)(out). It catalyses the reaction a plastoquinone + NADPH + (n+1) H(+)(in) = a plastoquinol + NADP(+) + n H(+)(out). Functionally, NDH shuttles electrons from NAD(P)H:plastoquinone, via FMN and iron-sulfur (Fe-S) centers, to quinones in the photosynthetic chain and possibly in a chloroplast respiratory chain. The immediate electron acceptor for the enzyme in this species is believed to be plastoquinone. Couples the redox reaction to proton translocation, and thus conserves the redox energy in a proton gradient. This is NAD(P)H-quinone oxidoreductase subunit J, chloroplastic from Liriodendron tulipifera (Tuliptree).